The sequence spans 506 residues: Tripartite terminase subunit 3 (506 aa).

Glu-128 functions as the For ATPase activity in the catalytic mechanism. Residues Asp-282, Glu-354, and Asp-475 each act as for nuclease activity in the active site.

The protein belongs to the herpesviridae TRM3 protein family. Interacts with the terminase subunits TRM1 and TRM2. Interacts with portal protein.

It is found in the host nucleus. Functionally, component of the molecular motor that translocates viral genomic DNA in empty capsid during DNA packaging. Forms a tripartite terminase complex together with TRM1 and TRM2 in the host cytoplasm. Once the complex reaches the host nucleus, it interacts with the capsid portal vertex. This portal forms a ring in which genomic DNA is translocated into the capsid. TRM3 carries an RNase H-like nuclease activity that plays an important role for the cleavage of concatemeric viral DNA into unit length genomes. In Amazona oratrix (yellow-headed parrot), this protein is Tripartite terminase subunit 3.